The following is a 164-amino-acid chain: ATP synthase B' chain, cyanelle (164 aa).

A helical transmembrane segment spans residues 26–46 (ATLPVMMVQLLVLMLILNAVF).

The protein belongs to the ATPase B chain family. F-type ATPases have 2 components, F(1) - the catalytic core - and F(0) - the membrane proton channel. F(1) has five subunits: alpha(3), beta(3), gamma(1), delta(1), epsilon(1). F(0) has four main subunits: a(1), b(1), b'(1) and c(10-14). The alpha and beta chains form an alternating ring which encloses part of the gamma chain. F(1) is attached to F(0) by a central stalk formed by the gamma and epsilon chains, while a peripheral stalk is formed by the delta, b and b' chains.

It localises to the plastid. The protein localises to the cyanelle thylakoid membrane. In terms of biological role, f(1)F(0) ATP synthase produces ATP from ADP in the presence of a proton or sodium gradient. F-type ATPases consist of two structural domains, F(1) containing the extramembraneous catalytic core and F(0) containing the membrane proton channel, linked together by a central stalk and a peripheral stalk. During catalysis, ATP synthesis in the catalytic domain of F(1) is coupled via a rotary mechanism of the central stalk subunits to proton translocation. Component of the F(0) channel, it forms part of the peripheral stalk, linking F(1) to F(0). The b'-subunit is a diverged and duplicated form of b found in plants and photosynthetic bacteria. The polypeptide is ATP synthase B' chain, cyanelle (Cyanophora paradoxa).